The primary structure comprises 127 residues: Holo-[acyl-carrier-protein] synthase (127 aa).

Mg(2+) is bound by residues aspartate 8 and glutamate 56.

Belongs to the P-Pant transferase superfamily. AcpS family. The cofactor is Mg(2+).

It localises to the cytoplasm. It catalyses the reaction apo-[ACP] + CoA = holo-[ACP] + adenosine 3',5'-bisphosphate + H(+). Transfers the 4'-phosphopantetheine moiety from coenzyme A to a Ser of acyl-carrier-protein. The sequence is that of Holo-[acyl-carrier-protein] synthase from Deinococcus deserti (strain DSM 17065 / CIP 109153 / LMG 22923 / VCD115).